Here is a 106-residue protein sequence, read N- to C-terminus: Large ribosomal subunit protein P2 (106 aa).

The interval 80-106 (AAAAPAKKVVEEKKEESDDDMGMGLFD) is disordered.

The protein belongs to the eukaryotic ribosomal protein P1/P2 family. In terms of assembly, P1 and P2 exist as dimers at the large ribosomal subunit. Post-translationally, phosphorylated.

Plays an important role in the elongation step of protein synthesis. The chain is Large ribosomal subunit protein P2 (rplp2) from Dictyostelium discoideum (Social amoeba).